Consider the following 475-residue polypeptide: CAAX prenyl protease 1 homolog (475 aa).

At 1 to 18 the chain is on the lumenal side; the sequence is MGMWASLDALWEMPAEKR. The chain crosses the membrane as a helical span at residues 19–39; that stretch reads IFGAVLLFSWTVYLWETFLAQ. Over 40-81 the chain is Nuclear; that stretch reads RQRRIYKTTTHVPPELGQIMDSETFEKSRLYQLDKSTFSFWS. A helical membrane pass occupies residues 82–102; sequence GLYSETEGTLILLFGGIPYLW. Topologically, residues 103-123 are lumenal; the sequence is RLSGRFCGYAGFGPEYEITQS. A helical transmembrane segment spans residues 124–144; the sequence is LVFLLLATLFSALTGLPWSLY. Residues 145–170 lie on the Nuclear side of the membrane; it reads NTFVIEEKHGFNQQTLGFFMKDAIKK. The helical transmembrane segment at 171–191 threads the bilayer; sequence FVVTQCILLPVSSLLLYIIKI. Over 192 to 195 the chain is Lumenal; sequence GGDY. The chain crosses the membrane as a helical span at residues 196–216; it reads FFIYAWLFTLVVSLVLVTIYA. At 217–347 the chain is on the nuclear side; sequence DYIAPLFDKF…GHWKLGHTVK (131 aa). Residue His335 participates in Zn(2+) binding. Glu336 is a catalytic residue. Position 339 (His339) interacts with Zn(2+). Residues 348 to 368 traverse the membrane as a helical segment; it reads NIIISQMNSFLCFFLFAVLIG. Over 369–382 the chain is Lumenal; the sequence is RKELFAAFGFYDSQ. A helical membrane pass occupies residues 383–405; the sequence is PTLIGLLIIFQFIFSPYNEVLSF. The Nuclear portion of the chain corresponds to 406-475; it reads CLTVLSRRFE…LQALKTMKQH (70 aa). Glu415 serves as a coordination point for Zn(2+).

Belongs to the peptidase M48A family. It depends on Zn(2+) as a cofactor. As to expression, widely expressed. High levels in kidney, prostate, testis and ovary.

The protein resides in the endoplasmic reticulum membrane. Its subcellular location is the nucleus inner membrane. It localises to the early endosome membrane. It is found in the late endosome membrane. The catalysed reaction is Hydrolyzes the peptide bond -P2-(S-farnesyl or geranylgeranyl)C-P1'-P2'-P3'-COOH where P1' and P2' are amino acids with aliphatic side chains and P3' is any C-terminal residue.. Transmembrane metalloprotease whose catalytic activity is critical for processing lamin A/LMNA on the inner nuclear membrane and clearing clogged translocons on the endoplasmic reticulum. Proteolytically removes the C-terminal three residues of farnesylated proteins. Also plays an antiviral role independently of its protease activity by restricting enveloped RNA and DNA viruses, including influenza A, Zika, Ebola, Sindbis, vesicular stomatitis, cowpox, and vaccinia. Mechanistically, controls IFITM antiviral pathway to hinder viruses from breaching the endosomal barrier by modulating membrane fluidity. This is CAAX prenyl protease 1 homolog from Homo sapiens (Human).